We begin with the raw amino-acid sequence, 459 residues long: Bifunctional protein GlmU (459 aa).

The interval 1 to 230 (MVKRYAVILA…FEETIGVNDR (230 aa)) is pyrophosphorylase. Residues 9 to 12 (LAAG), lysine 23, glutamine 73, and 78 to 79 (GT) contribute to the UDP-N-acetyl-alpha-D-glucosamine site. Aspartate 103 is a Mg(2+) binding site. UDP-N-acetyl-alpha-D-glucosamine is bound by residues glycine 140, glutamate 155, asparagine 170, and asparagine 228. Residue asparagine 228 participates in Mg(2+) binding. Residues 231 to 251 (VALAEAEKIMRERICRKHMMN) form a linker region. The tract at residues 252 to 459 (GVTIIDPAHT…VDRLSIKKNS (208 aa)) is N-acetyltransferase. Residues arginine 333 and lysine 351 each coordinate UDP-N-acetyl-alpha-D-glucosamine. Histidine 363 (proton acceptor) is an active-site residue. Tyrosine 366 and asparagine 377 together coordinate UDP-N-acetyl-alpha-D-glucosamine. Residues 386–387 (NY), alanine 423, and arginine 440 each bind acetyl-CoA.

In the N-terminal section; belongs to the N-acetylglucosamine-1-phosphate uridyltransferase family. This sequence in the C-terminal section; belongs to the transferase hexapeptide repeat family. Homotrimer. Mg(2+) serves as cofactor.

The protein resides in the cytoplasm. The catalysed reaction is alpha-D-glucosamine 1-phosphate + acetyl-CoA = N-acetyl-alpha-D-glucosamine 1-phosphate + CoA + H(+). It carries out the reaction N-acetyl-alpha-D-glucosamine 1-phosphate + UTP + H(+) = UDP-N-acetyl-alpha-D-glucosamine + diphosphate. It participates in nucleotide-sugar biosynthesis; UDP-N-acetyl-alpha-D-glucosamine biosynthesis; N-acetyl-alpha-D-glucosamine 1-phosphate from alpha-D-glucosamine 6-phosphate (route II): step 2/2. It functions in the pathway nucleotide-sugar biosynthesis; UDP-N-acetyl-alpha-D-glucosamine biosynthesis; UDP-N-acetyl-alpha-D-glucosamine from N-acetyl-alpha-D-glucosamine 1-phosphate: step 1/1. Its pathway is bacterial outer membrane biogenesis; LPS lipid A biosynthesis. In terms of biological role, catalyzes the last two sequential reactions in the de novo biosynthetic pathway for UDP-N-acetylglucosamine (UDP-GlcNAc). The C-terminal domain catalyzes the transfer of acetyl group from acetyl coenzyme A to glucosamine-1-phosphate (GlcN-1-P) to produce N-acetylglucosamine-1-phosphate (GlcNAc-1-P), which is converted into UDP-GlcNAc by the transfer of uridine 5-monophosphate (from uridine 5-triphosphate), a reaction catalyzed by the N-terminal domain. The chain is Bifunctional protein GlmU from Geobacillus sp. (strain WCH70).